The chain runs to 335 residues: Homeobox protein DBX1 (335 aa).

Disordered regions lie at residues 56-102 (RSIP…LSPA) and 240-335 (KERE…ITVS). The span at 83–95 (GSPGSGSRRGSSP) shows a compositional bias: low complexity. A DNA-binding region (homeobox) is located at residues 181–240 (GMLRRAVFSDVQRKALEKTFQKQKYISKPDRKKLASKLGLKDSQVKIWFQNRRMKWRNSK). A compositionally biased stretch (low complexity) spans 299–317 (GPLPASPAHSSSPGKPSDF). The segment covering 318 to 335 (SDSDEDEEGEEDEEITVS) has biased composition (acidic residues).

The protein belongs to the H2.0 homeobox family.

It is found in the nucleus. Its function is as follows. Could have a role in patterning the central nervous system during embryogenesis. Has a key role in regulating the distinct phenotypic features that distinguish two major classes of ventral interneurons, V0 and V1 neurons. Regulates the transcription factor profile, neurotransmitter phenotype, intraspinal migratory path and axonal trajectory of V0 neurons, features that differentiate them from an adjacent set of V1 neurons. The polypeptide is Homeobox protein DBX1 (Dbx1) (Rattus norvegicus (Rat)).